Consider the following 819-residue polypeptide: Leucine--tRNA ligase (819 aa).

The short motif at P40–H51 is the 'HIGH' region element. The short motif at K600–S604 is the 'KMSKS' region element. K603 is an ATP binding site.

This sequence belongs to the class-I aminoacyl-tRNA synthetase family.

The protein resides in the cytoplasm. It carries out the reaction tRNA(Leu) + L-leucine + ATP = L-leucyl-tRNA(Leu) + AMP + diphosphate. The sequence is that of Leucine--tRNA ligase from Chlamydia trachomatis serovar A (strain ATCC VR-571B / DSM 19440 / HAR-13).